The chain runs to 253 residues: tRNA-cytidine(32) 2-sulfurtransferase 2 (253 aa).

Residues 33-38 (SGGKDS) carry the PP-loop motif motif. [4Fe-4S] cluster-binding residues include cysteine 108, cysteine 111, and cysteine 199.

This sequence belongs to the TtcA family. In terms of assembly, homodimer. The cofactor is Mg(2+). [4Fe-4S] cluster is required as a cofactor.

Its subcellular location is the cytoplasm. The catalysed reaction is cytidine(32) in tRNA + S-sulfanyl-L-cysteinyl-[cysteine desulfurase] + AH2 + ATP = 2-thiocytidine(32) in tRNA + L-cysteinyl-[cysteine desulfurase] + A + AMP + diphosphate + H(+). The protein operates within tRNA modification. Its function is as follows. Catalyzes the ATP-dependent 2-thiolation of cytidine in position 32 of tRNA, to form 2-thiocytidine (s(2)C32). The sulfur atoms are provided by the cysteine/cysteine desulfurase (IscS) system. This chain is tRNA-cytidine(32) 2-sulfurtransferase 2, found in Francisella tularensis subsp. novicida (strain U112).